The primary structure comprises 734 residues: 1,4-alpha-glucan branching enzyme GlgB (734 aa).

Asp-413 functions as the Nucleophile in the catalytic mechanism. Glu-466 functions as the Proton donor in the catalytic mechanism.

This sequence belongs to the glycosyl hydrolase 13 family. GlgB subfamily. As to quaternary structure, monomer.

The enzyme catalyses Transfers a segment of a (1-&gt;4)-alpha-D-glucan chain to a primary hydroxy group in a similar glucan chain.. It functions in the pathway glycan biosynthesis; glycogen biosynthesis. Functionally, catalyzes the formation of the alpha-1,6-glucosidic linkages in glycogen by scission of a 1,4-alpha-linked oligosaccharide from growing alpha-1,4-glucan chains and the subsequent attachment of the oligosaccharide to the alpha-1,6 position. This Nitrosomonas europaea (strain ATCC 19718 / CIP 103999 / KCTC 2705 / NBRC 14298) protein is 1,4-alpha-glucan branching enzyme GlgB.